The sequence spans 127 residues: Protein translocase subunit SecE (127 aa).

Helical transmembrane passes span 17–37, 41–61, and 95–115; these read VKWISISIFFILSFFINMCFY, LFIRIFIISCLMLCAIGTMIY, and FIVISVTIFISFILWSIDSVI.

This sequence belongs to the SecE/SEC61-gamma family. Component of the Sec protein translocase complex. Heterotrimer consisting of SecY, SecE and SecG subunits. The heterotrimers can form oligomers, although 1 heterotrimer is thought to be able to translocate proteins. Interacts with the ribosome. Interacts with SecDF, and other proteins may be involved. Interacts with SecA.

The protein localises to the cell inner membrane. In terms of biological role, essential subunit of the Sec protein translocation channel SecYEG. Clamps together the 2 halves of SecY. May contact the channel plug during translocation. In Buchnera aphidicola subsp. Acyrthosiphon pisum (strain APS) (Acyrthosiphon pisum symbiotic bacterium), this protein is Protein translocase subunit SecE.